The sequence spans 142 residues: Large ribosomal subunit protein uL11 (142 aa).

Belongs to the universal ribosomal protein uL11 family. As to quaternary structure, part of the ribosomal stalk of the 50S ribosomal subunit. Interacts with L10 and the large rRNA to form the base of the stalk. L10 forms an elongated spine to which L12 dimers bind in a sequential fashion forming a multimeric L10(L12)X complex. In terms of processing, one or more lysine residues are methylated.

In terms of biological role, forms part of the ribosomal stalk which helps the ribosome interact with GTP-bound translation factors. This Aeromonas hydrophila subsp. hydrophila (strain ATCC 7966 / DSM 30187 / BCRC 13018 / CCUG 14551 / JCM 1027 / KCTC 2358 / NCIMB 9240 / NCTC 8049) protein is Large ribosomal subunit protein uL11.